A 707-amino-acid polypeptide reads, in one-letter code: Molybdenum cofactor sulfurase (707 aa).

An N6-(pyridoxal phosphate)lysine modification is found at Lys206. The active site involves Cys365. An MOSC domain is found at 558–705; sequence QWLENALDMT…VEAGSAVRFF (148 aa).

It belongs to the class-V pyridoxal-phosphate-dependent aminotransferase family. MOCOS subfamily. The cofactor is pyridoxal 5'-phosphate.

It catalyses the reaction Mo-molybdopterin + L-cysteine + AH2 = thio-Mo-molybdopterin + L-alanine + A + H2O. It functions in the pathway cofactor biosynthesis; molybdopterin biosynthesis. In terms of biological role, sulfurates the molybdenum cofactor. Sulfation of molybdenum is essential for xanthine dehydrogenase (XDH) and aldehyde oxidase (ADO) enzymes in which molybdenum cofactor is liganded by 1 oxygen and 1 sulfur atom in active form. In Caenorhabditis briggsae, this protein is Molybdenum cofactor sulfurase (mocs-1).